A 506-amino-acid polypeptide reads, in one-letter code: Steroid (22S)-hydroxylase (506 aa).

The chain crosses the membrane as a helical span at residues 12–32 (LLFFLPFILLALLTFYTTTVA). C449 serves as a coordination point for heme.

The protein belongs to the cytochrome P450 family. Heme is required as a cofactor. Highly expressed in roots and leaf blades. Expressed in shoot apex, stems, leaf sheaths, inflorescences and flowers.

Its subcellular location is the membrane. It catalyses the reaction a C28-steroid + reduced [NADPH--hemoprotein reductase] + O2 = a (22S)-22-hydroxy C28-steroid + oxidized [NADPH--hemoprotein reductase] + H2O + H(+). The catalysed reaction is campesterol + reduced [NADPH--hemoprotein reductase] + O2 = (22S)-22-hydroxycampesterol + oxidized [NADPH--hemoprotein reductase] + H2O + H(+). The enzyme catalyses campestanol + reduced [NADPH--hemoprotein reductase] + O2 = 6-deoxycathasterone + oxidized [NADPH--hemoprotein reductase] + H2O + H(+). Its pathway is plant hormone biosynthesis; brassinosteroid biosynthesis. Its function is as follows. Catalyzes the C22-alpha-hydroxylation step in brassinosteroid biosynthesis, which is the rate-limiting step in this biosynthetic pathway. Catalyzes the conversion of campesterol (CR) to (22S)-22-hydroxycampesterol (22-OHCR, 22-hydroxyCR) and of campestanol (CN) to 6-deoxycathasterone (6-deoxoCT). Required for auxin responses involved in the regulation of epidermal cells length of the lamina joint. This Oryza sativa subsp. japonica (Rice) protein is Steroid (22S)-hydroxylase.